A 263-amino-acid polypeptide reads, in one-letter code: Non-functional protein STAY-GREEN, chloroplastic (263 aa).

The N-terminal 54 residues, 1–54 (MDTLTSAPLLTSKFKPSFSPQQKPCFPHRRRFENGKKKQSIVPVARLFGPAIFE), are a transit peptide targeting the chloroplast.

The protein belongs to the staygreen family.

It localises to the plastid. The protein resides in the chloroplast. In terms of biological role, non-functional protein probably interfering with the disassembling mechanism of the intact light-harvesting complex of photosystem II (LHCII) in the thylakoid membranes. Responsible for a stay-green phenotype. This is Non-functional protein STAY-GREEN, chloroplastic (SGR) from Pisum sativum (Garden pea).